A 148-amino-acid chain; its full sequence is Small ribosomal subunit protein eS6 (148 aa).

It belongs to the eukaryotic ribosomal protein eS6 family.

In Pyrobaculum aerophilum (strain ATCC 51768 / DSM 7523 / JCM 9630 / CIP 104966 / NBRC 100827 / IM2), this protein is Small ribosomal subunit protein eS6.